Reading from the N-terminus, the 305-residue chain is Acetaldehyde dehydrogenase (305 aa).

13–16 provides a ligand contact to NAD(+); that stretch reads SGNI. Catalysis depends on cysteine 128, which acts as the Acyl-thioester intermediate. NAD(+) contacts are provided by residues 159–167 and asparagine 278; that span reads SAGPGTRQN.

This sequence belongs to the acetaldehyde dehydrogenase family.

The catalysed reaction is acetaldehyde + NAD(+) + CoA = acetyl-CoA + NADH + H(+). The sequence is that of Acetaldehyde dehydrogenase from Roseiflexus sp. (strain RS-1).